A 240-amino-acid chain; its full sequence is Uridylate kinase (240 aa).

13-16 (KASG) contributes to the ATP binding site. An involved in allosteric activation by GTP region spans residues 21 to 26 (GSQGFG). Gly-55 contributes to the UMP binding site. Residues Gly-56 and Arg-60 each coordinate ATP. UMP is bound by residues Asp-75 and 136 to 143 (TGNPFFTT). ATP-binding residues include Thr-163, Gln-164, Tyr-169, and Asp-172.

It belongs to the UMP kinase family. Homohexamer.

It localises to the cytoplasm. The enzyme catalyses UMP + ATP = UDP + ADP. The protein operates within pyrimidine metabolism; CTP biosynthesis via de novo pathway; UDP from UMP (UMPK route): step 1/1. Its activity is regulated as follows. Allosterically activated by GTP. Inhibited by UTP. In terms of biological role, catalyzes the reversible phosphorylation of UMP to UDP. This is Uridylate kinase from Rhizobium meliloti (strain 1021) (Ensifer meliloti).